The chain runs to 209 residues: Dual specificity protein phosphatase 22 (209 aa).

Residues 4-144 form the Tyrosine-protein phosphatase domain; it reads GMNKILPSLF…LEDFGKHDVY (141 aa). C88 serves as the catalytic Phosphocysteine intermediate. Residues 170–193 form a disordered region; that stretch reads DKHKQQEAAESQSATSSGRQWSSH. Positions 177-193 are enriched in low complexity; that stretch reads AAESQSATSSGRQWSSH.

Belongs to the protein-tyrosine phosphatase family. Non-receptor class dual specificity subfamily.

It is found in the cytoplasm. The protein resides in the nucleus. It carries out the reaction O-phospho-L-tyrosyl-[protein] + H2O = L-tyrosyl-[protein] + phosphate. The enzyme catalyses O-phospho-L-seryl-[protein] + H2O = L-seryl-[protein] + phosphate. The catalysed reaction is O-phospho-L-threonyl-[protein] + H2O = L-threonyl-[protein] + phosphate. Its function is as follows. Activates the Jnk signaling pathway. Dephosphorylates and deactivates p38 and stress-activated protein kinase/c-Jun N-terminal kinase (SAPK/JNK). The protein is Dual specificity protein phosphatase 22 (dusp22) of Xenopus tropicalis (Western clawed frog).